The primary structure comprises 514 residues: Cholesterol side-chain cleavage enzyme, mitochondrial (514 aa).

A mitochondrion-targeting transit peptide spans 1 to 39 (MMVSWSVCRSSLALPACGLPSARHNSSMPVVRQALSPDN). Heme is bound at residue Cys458.

The protein belongs to the cytochrome P450 family. Heme serves as cofactor. As to expression, in the ovary, not found in early vitellogenic follicles, barely detected in postvitellogenic follicles and abundant in post-ovulatory follicles.

The protein localises to the mitochondrion inner membrane. It carries out the reaction 6 reduced [adrenodoxin] + cholesterol + 3 O2 + 6 H(+) = 4-methylpentanal + pregnenolone + 6 oxidized [adrenodoxin] + 4 H2O. It participates in lipid metabolism; C21-steroid hormone metabolism. Catalyzes the side-chain cleavage reaction of cholesterol to pregnenolone, the precursor of most steroid hormones. In Oncorhynchus mykiss (Rainbow trout), this protein is Cholesterol side-chain cleavage enzyme, mitochondrial (cyp11a1).